The sequence spans 422 residues: UPF0761 membrane protein XAC0937 (422 aa).

The next 6 helical transmembrane spans lie at 45–65, 102–122, 151–171, 179–199, 213–233, and 247–267; these read VFALVPLAIVVFGVLSAFPAF, FTVAGMVALVASLLITLHSIE, GTMLAAASMAMAAYVFALPLF, LAEFAWRLAPMAVEFVCIVLI, ALPGALLAVILMEIVKWGFGF, and ALSALPILLLWIYLSWVSVLL.

Belongs to the UPF0761 family.

It localises to the cell inner membrane. The sequence is that of UPF0761 membrane protein XAC0937 from Xanthomonas axonopodis pv. citri (strain 306).